The chain runs to 425 residues: Protein CLP1 homolog (425 aa).

ATP is bound by residues Glu-18, Lys-59, and 121–126; that span reads DVGKST.

Belongs to the Clp1 family. Clp1 subfamily.

Its subcellular location is the nucleus. In terms of biological role, required for endonucleolytic cleavage during polyadenylation-dependent pre-mRNA 3'-end formation. The chain is Protein CLP1 homolog (cbc) from Drosophila pseudoobscura pseudoobscura (Fruit fly).